Consider the following 188-residue polypeptide: MSKNIVMLGLPGVGKGTNADIMVEDFKLPHISTGDIFRSAMANHTELGDKAKSFMDAGNLVPDEITNGIVNERLNEADVKDAGGFILDGYPRNTSQADSLESFLRSIQQKLNAVIYLDASEKTVTNRMLGRGREDDTPEVVAHRIDVAKKETMPLVEYYRNKGSLYTIDANGEVSVVYPKIKKLVSNL.

An ATP-binding site is contributed by 12–17; sequence GVGKGT. An NMP region spans residues 32–61; that stretch reads STGDIFRSAMANHTELGDKAKSFMDAGNLV. AMP contacts are provided by residues threonine 33, arginine 38, 59–61, 89–92, and glutamine 96; these read NLV and GYPR. The tract at residues 130 to 136 is LID; that stretch reads GRGREDD. Arginine 131 contacts ATP. AMP-binding residues include arginine 133 and arginine 144. Glycine 172 is an ATP binding site.

It belongs to the adenylate kinase family. In terms of assembly, monomer.

It localises to the cytoplasm. The catalysed reaction is AMP + ATP = 2 ADP. It functions in the pathway purine metabolism; AMP biosynthesis via salvage pathway; AMP from ADP: step 1/1. Catalyzes the reversible transfer of the terminal phosphate group between ATP and AMP. Plays an important role in cellular energy homeostasis and in adenine nucleotide metabolism. The protein is Adenylate kinase of Oenococcus oeni (strain ATCC BAA-331 / PSU-1).